The chain runs to 109 residues: Iron-sulfur cluster assembly protein CyaY (109 aa).

This sequence belongs to the frataxin family.

Functionally, involved in iron-sulfur (Fe-S) cluster assembly. May act as a regulator of Fe-S biogenesis. This is Iron-sulfur cluster assembly protein CyaY from Acidovorax ebreus (strain TPSY) (Diaphorobacter sp. (strain TPSY)).